The sequence spans 257 residues: 4-hydroxy-tetrahydrodipicolinate reductase (257 aa).

7–12 (GCLGRM) serves as a coordination point for NAD(+). Arg34 contributes to the NADP(+) binding site. NAD(+) is bound by residues 96-98 (GTT) and 117-120 (SCNM). The Proton donor/acceptor role is filled by His149. His150 contributes to the (S)-2,3,4,5-tetrahydrodipicolinate binding site. Residue Lys153 is the Proton donor of the active site. Residue 159–160 (GT) coordinates (S)-2,3,4,5-tetrahydrodipicolinate.

It belongs to the DapB family.

The protein resides in the cytoplasm. It catalyses the reaction (S)-2,3,4,5-tetrahydrodipicolinate + NAD(+) + H2O = (2S,4S)-4-hydroxy-2,3,4,5-tetrahydrodipicolinate + NADH + H(+). The enzyme catalyses (S)-2,3,4,5-tetrahydrodipicolinate + NADP(+) + H2O = (2S,4S)-4-hydroxy-2,3,4,5-tetrahydrodipicolinate + NADPH + H(+). Its pathway is amino-acid biosynthesis; L-lysine biosynthesis via DAP pathway; (S)-tetrahydrodipicolinate from L-aspartate: step 4/4. In terms of biological role, catalyzes the conversion of 4-hydroxy-tetrahydrodipicolinate (HTPA) to tetrahydrodipicolinate. The polypeptide is 4-hydroxy-tetrahydrodipicolinate reductase (Anaplasma marginale (strain St. Maries)).